The following is a 155-amino-acid chain: Ribosomal RNA large subunit methyltransferase H (155 aa).

S-adenosyl-L-methionine-binding positions include Leu-72, Gly-103, and 122 to 127 (LSPLTL).

It belongs to the RNA methyltransferase RlmH family. In terms of assembly, homodimer.

The protein resides in the cytoplasm. It catalyses the reaction pseudouridine(1915) in 23S rRNA + S-adenosyl-L-methionine = N(3)-methylpseudouridine(1915) in 23S rRNA + S-adenosyl-L-homocysteine + H(+). Functionally, specifically methylates the pseudouridine at position 1915 (m3Psi1915) in 23S rRNA. In Histophilus somni (strain 2336) (Haemophilus somnus), this protein is Ribosomal RNA large subunit methyltransferase H.